The following is a 44-amino-acid chain: Defensin heliomicin (44 aa).

Intrachain disulfides connect Cys7–Cys32, Cys18–Cys40, and Cys22–Cys42.

The protein localises to the secreted. In terms of biological role, this peptide has potent anti-fungal activity. Has no activity against Gram-negative and Gram-positive bacteria. This is Defensin heliomicin from Heliothis virescens (Tobacco budworm moth).